A 610-amino-acid chain; its full sequence is Glutamine--fructose-6-phosphate aminotransferase [isomerizing] (610 aa).

The active-site Nucleophile; for GATase activity is Cys-2. Positions 2-218 constitute a Glutamine amidotransferase type-2 domain; that stretch reads CGIVGAVAQR…EGDIAEITRR (217 aa). SIS domains are found at residues 278 to 426 and 459 to 600; these read IVDS…VKGH and LAED…VDQP. Lys-605 acts as the For Fru-6P isomerization activity in catalysis.

In terms of assembly, homodimer.

It localises to the cytoplasm. The catalysed reaction is D-fructose 6-phosphate + L-glutamine = D-glucosamine 6-phosphate + L-glutamate. In terms of biological role, catalyzes the first step in hexosamine metabolism, converting fructose-6P into glucosamine-6P using glutamine as a nitrogen source. This Haemophilus influenzae (strain ATCC 51907 / DSM 11121 / KW20 / Rd) protein is Glutamine--fructose-6-phosphate aminotransferase [isomerizing].